Reading from the N-terminus, the 432-residue chain is N-acylneuraminate cytidylyltransferase (432 aa).

Residues R39, N49, R98, S107, S109, and Q130 each contribute to the substrate site. R188 is a catalytic residue.

It belongs to the CMP-NeuNAc synthase family. As to quaternary structure, homotetramer; the active enzyme is formed by a dimer of dimers. Expressed in testis, ovary and liver.

It localises to the nucleus. It carries out the reaction an N-acylneuraminate + CTP = a CMP-N-acyl-beta-neuraminate + diphosphate. Its pathway is amino-sugar metabolism; N-acetylneuraminate metabolism. Functionally, catalyzes the activation of N-acetylneuraminic acid (NeuNAc) to cytidine 5'-monophosphate N-acetylneuraminic acid (CMP-NeuNAc), a substrate required for the addition of sialic acid. The polypeptide is N-acylneuraminate cytidylyltransferase (cmas) (Oncorhynchus mykiss (Rainbow trout)).